Reading from the N-terminus, the 701-residue chain is DNA ligase A (701 aa).

The segment at 1–23 (MSEKATGEVEAELPEHPDADERR) is disordered. Residues 49–53 (DAEFD), 99–100 (SL), and E129 each bind NAD(+). K131 acts as the N6-AMP-lysine intermediate in catalysis. Residues R152, E192, K308, and K332 each contribute to the NAD(+) site. Positions 426, 429, 445, and 451 each coordinate Zn(2+). The BRCT domain maps to 615-701 (SIERTLEGLS…EQGPPVEPAE (87 aa)).

The protein belongs to the NAD-dependent DNA ligase family. LigA subfamily. It depends on Mg(2+) as a cofactor. Mn(2+) serves as cofactor.

It carries out the reaction NAD(+) + (deoxyribonucleotide)n-3'-hydroxyl + 5'-phospho-(deoxyribonucleotide)m = (deoxyribonucleotide)n+m + AMP + beta-nicotinamide D-nucleotide.. Its function is as follows. DNA ligase that catalyzes the formation of phosphodiester linkages between 5'-phosphoryl and 3'-hydroxyl groups in double-stranded DNA using NAD as a coenzyme and as the energy source for the reaction. It is essential for DNA replication and repair of damaged DNA. Probably the only ligase required for non-homologous end joining (NHEJ) repair of 3-overhangs. The polypeptide is DNA ligase A (Mycolicibacterium smegmatis (strain ATCC 700084 / mc(2)155) (Mycobacterium smegmatis)).